We begin with the raw amino-acid sequence, 354 residues long: Protein RecA (354 aa).

ATP is bound at residue 67-74 (GPESSGKT).

It belongs to the RecA family.

It is found in the cytoplasm. Can catalyze the hydrolysis of ATP in the presence of single-stranded DNA, the ATP-dependent uptake of single-stranded DNA by duplex DNA, and the ATP-dependent hybridization of homologous single-stranded DNAs. It interacts with LexA causing its activation and leading to its autocatalytic cleavage. This Serratia marcescens protein is Protein RecA.